The sequence spans 1484 residues: Chromosome partition protein MukB (1484 aa).

Residue 34-41 (GGNGAGKS) participates in ATP binding. Coiled-coil stretches lie at residues 326-418 (LEAD…QYNQ), 444-472 (LDTF…QTAH), and 509-602 (RHLA…QRAP). Residues 666–783 (PGGAEDQRLN…SLPIFGRAAR (118 aa)) are flexible hinge. Coiled-coil stretches lie at residues 835-923 (EAEI…AKLE), 977-1116 (EMLS…AKAG), and 1209-1265 (VEAI…LQSV). The disordered stretch occupies residues 1049–1074 (ADSGAEERARQRRDELHAQLSNNRSR). The segment covering 1051 to 1065 (SGAEERARQRRDELH) has biased composition (basic and acidic residues).

Belongs to the SMC family. MukB subfamily. In terms of assembly, homodimerization via its hinge domain. Binds to DNA via its C-terminal region. Interacts, and probably forms a ternary complex, with MukE and MukF via its C-terminal region. The complex formation is stimulated by calcium or magnesium. Interacts with tubulin-related protein FtsZ.

It localises to the cytoplasm. The protein localises to the nucleoid. Plays a central role in chromosome condensation, segregation and cell cycle progression. Functions as a homodimer, which is essential for chromosome partition. Involved in negative DNA supercoiling in vivo, and by this means organize and compact chromosomes. May achieve or facilitate chromosome segregation by condensation DNA from both sides of a centrally located replisome during cell division. The polypeptide is Chromosome partition protein MukB (Salmonella dublin (strain CT_02021853)).